The following is a 239-amino-acid chain: Prolyl hydroxylase EGLN3 (239 aa).

A beta(2)beta(3) 'finger-like' loop region spans residues 62-73; the sequence is AGPRAGVSKRHL. The interval 88 to 104 is required for interaction with ADRB2; the sequence is CEAINFLLSLIDRLVLY. The Fe2OG dioxygenase domain maps to 116–214; it reads ERSKAMVACY…RYAMTVWYFD (99 aa). His-135, Asp-137, and His-196 together coordinate Fe cation. Arg-205 is a 2-oxoglutarate binding site.

As to quaternary structure, interacts with ADRB2; the interaction hydroxylates ADRB2 facilitating its ubiquitination by the VHL-E3 ligase complex. Interacts with PAX2; the interaction targets PAX2 for destruction. Interacts with PKM; the interaction hydroxylates PKM in hypoxia. Interacts with WDR83; the interaction leads to almost complete elimination of HIF-mediated reporter activity. Interacts with BCL2 (via its BH4 domain); the interaction disrupts the BAX-BCL4 complex inhibiting the anti-apoptotic activity of BCL2. Requires Fe(2+) as cofactor. It depends on L-ascorbate as a cofactor. In terms of processing, ubiquitinated by SIAH1 and/or SIAH2 in response to the unfolded protein response (UPR), leading to its degradation. As to expression, highly expressed in vascular smooth muscle. Moderately expressed in esophagus, stomach, small bowel and aorta. Low levels in tail and kidney. Expression also in pheochromocytoma cell line PC-12.

Its subcellular location is the nucleus. The protein localises to the cytoplasm. It catalyses the reaction L-prolyl-[protein] + 2-oxoglutarate + O2 = trans-4-hydroxy-L-prolyl-[protein] + succinate + CO2. The catalysed reaction is L-prolyl-[hypoxia-inducible factor alpha subunit] + 2-oxoglutarate + O2 = trans-4-hydroxy-L-prolyl-[hypoxia-inducible factor alpha subunit] + succinate + CO2. Functionally, prolyl hydroxylase that mediates hydroxylation of proline residues in target proteins, such as PKM, TELO2, ATF4 and HIF1A. Target proteins are preferentially recognized via a LXXLAP motif. Cellular oxygen sensor that catalyzes, under normoxic conditions, the post-translational formation of 4-hydroxyproline in hypoxia-inducible factor (HIF) alpha proteins. Hydroxylates a specific proline found in each of the oxygen-dependent degradation (ODD) domains (N-terminal, NODD, and C-terminal, CODD) of HIF1A. Also hydroxylates HIF2A. Has a preference for the CODD site for both HIF1A and HIF2A. Hydroxylation on the NODD site by EGLN3 appears to require prior hydroxylation on the CODD site. Hydroxylated HIFs are then targeted for proteasomal degradation via the von Hippel-Lindau ubiquitination complex. Under hypoxic conditions, the hydroxylation reaction is attenuated allowing HIFs to escape degradation resulting in their translocation to the nucleus, heterodimerization with HIF1B, and increased expression of hypoxy-inducible genes. ELGN3 is the most important isozyme in limiting physiological activation of HIFs (particularly HIF2A) in hypoxia. Also hydroxylates PKM in hypoxia, limiting glycolysis. Under normoxia, hydroxylates and regulates the stability of ADRB2. Regulator of cardiomyocyte and neuronal apoptosis. In cardiomyocytes, inhibits the anti-apoptotic effect of BCL2 by disrupting the BAX-BCL2 complex. In neurons, has a NGF-induced proapoptotic effect, probably through regulating CASP3 activity. Also essential for hypoxic regulation of neutrophilic inflammation. Plays a crucial role in DNA damage response (DDR) by hydroxylating TELO2, promoting its interaction with ATR which is required for activation of the ATR/CHK1/p53 pathway. Also mediates hydroxylation of ATF4, leading to decreased protein stability of ATF4. In Rattus norvegicus (Rat), this protein is Prolyl hydroxylase EGLN3 (Egln3).